Reading from the N-terminus, the 762-residue chain is 5-methyltetrahydropteroyltriglutamate--homocysteine methyltransferase (762 aa).

5-methyltetrahydropteroyltri-L-glutamate-binding positions include 17–20 and K111; that span reads REWK. L-homocysteine contacts are provided by residues 435-437 and E488; that span reads IGS. L-methionine contacts are provided by residues 435–437 and E488; that span reads IGS. Residues 519-520 and W565 contribute to the 5-methyltetrahydropteroyltri-L-glutamate site; that span reads RC. D603 lines the L-homocysteine pocket. L-methionine is bound at residue D603. E609 provides a ligand contact to 5-methyltetrahydropteroyltri-L-glutamate. H645, C647, and E669 together coordinate Zn(2+). Catalysis depends on H698, which acts as the Proton donor. A Zn(2+)-binding site is contributed by C730.

This sequence belongs to the vitamin-B12 independent methionine synthase family. Zn(2+) serves as cofactor.

The enzyme catalyses 5-methyltetrahydropteroyltri-L-glutamate + L-homocysteine = tetrahydropteroyltri-L-glutamate + L-methionine. The protein operates within amino-acid biosynthesis; L-methionine biosynthesis via de novo pathway; L-methionine from L-homocysteine (MetE route): step 1/1. Its function is as follows. Catalyzes the transfer of a methyl group from 5-methyltetrahydrofolate to homocysteine resulting in methionine formation. The sequence is that of 5-methyltetrahydropteroyltriglutamate--homocysteine methyltransferase from Bacillus cereus (strain G9842).